Here is a 382-residue protein sequence, read N- to C-terminus: MSQTFLAFSRPSIGDEEIAAVTRVLRSGWITTGPECQKLEEEFAARVGARHAVALSSATGAMHVALLALGVGPGDEVITPSQTWVSTANMICLLGATPVFVDVDRDTLMTSAALIEHAITPRTKAIVPVHYAGAAFDLDPLYALADRHGITVIEDAAHAAGTAYQGRPVGQQGTAIFSFHAIKNMTCAEGAMLVTDNARLADRVRQLKFHGLGVDAYDRLTLGRKPQAEVMEPGFKYNLADINASIARVQLQRLDAINAQRQALASHYLERLANSPVLPLALPRYAQQHAWHLFILRIDPERCGLDRDAFMKALQARNIGTGIHFIATHLHSYYRKRFPDVRLPDTEWNSSRLCSIPLFPDMSLDDVERVVGAIESTLESSH.

Lys183 is modified (N6-(pyridoxal phosphate)lysine).

This sequence belongs to the DegT/DnrJ/EryC1 family. ArnB subfamily. In terms of assembly, homodimer. Pyridoxal 5'-phosphate is required as a cofactor.

The catalysed reaction is UDP-4-amino-4-deoxy-beta-L-arabinose + 2-oxoglutarate = UDP-beta-L-threo-pentopyranos-4-ulose + L-glutamate. It participates in nucleotide-sugar biosynthesis; UDP-4-deoxy-4-formamido-beta-L-arabinose biosynthesis; UDP-4-deoxy-4-formamido-beta-L-arabinose from UDP-alpha-D-glucuronate: step 2/3. It functions in the pathway bacterial outer membrane biogenesis; lipopolysaccharide biosynthesis. Its function is as follows. Catalyzes the conversion of UDP-4-keto-arabinose (UDP-Ara4O) to UDP-4-amino-4-deoxy-L-arabinose (UDP-L-Ara4N). The modified arabinose is attached to lipid A and is required for resistance to polymyxin and cationic antimicrobial peptides. In Pseudomonas syringae pv. syringae (strain B728a), this protein is UDP-4-amino-4-deoxy-L-arabinose--oxoglutarate aminotransferase.